Consider the following 492-residue polypeptide: Dipeptide and tripeptide permease A (492 aa).

Residues 1–20 (MSTANKHPEAASLNAFKQPR) are Cytoplasmic-facing. A helical transmembrane segment spans residues 21–43 (SFYLIFSIELWERFGYYGLQGIM). Topologically, residues 44–58 (AVYLVKMLGMSEAQS) are periplasmic. Residues 59–79 (ITLFASFSALVYGLIAVGGWL) form a helical membrane-spanning segment. Topologically, residues 80–88 (GDKVLGTKR) are cytoplasmic. Residues 89 to 109 (VIVLGTLVLALGYALVAWSGH) form a helical membrane-spanning segment. Position 110 (D110) is a topological domain, periplasmic. Residues 111 to 131 (IAMIYFGMATIAVGNGLFKAN) traverse the membrane as a helical segment. Residues 132 to 152 (PSSLLSTCYEKDDPRLDGAFT) lie on the Cytoplasmic side of the membrane. Residues 153–173 (MYYMAINIGSFFSMLATPWLA) traverse the membrane as a helical segment. Residues 174-178 (AQFGW) lie on the Periplasmic side of the membrane. A helical transmembrane segment spans residues 179-199 (STAFGLSFVGMLITLVNFMFF). Residues 200–217 (RKWVKDHGSKPDFAPLNM) are Cytoplasmic-facing. A helical transmembrane segment spans residues 218–238 (GKLLVTLLGIAVMIAAATWLL). The Periplasmic portion of the chain corresponds to 239–245 (HNQDIAR). The chain crosses the membrane as a helical span at residues 246–266 (MVLGAVAVAIVVIFTKEALTL). Residues 267 to 273 (KGAARRK) are Cytoplasmic-facing. The chain crosses the membrane as a helical span at residues 274–294 (MIVAFLLMLEAIVFFVLYMQM). The Periplasmic portion of the chain corresponds to 295 to 319 (PTSLNFFAIRNVEHSLLGIAFQPEQ). Residues 320 to 340 (FQALNPFWIMIFSPLLAALYN) form a helical membrane-spanning segment. Topologically, residues 341 to 351 (KLGDRMPMPHK) are cytoplasmic. A helical transmembrane segment spans residues 352–372 (FALGMVLCSAAFLVLPLGASL). Residues 373-377 (ANKMG) lie on the Periplasmic side of the membrane. A helical transmembrane segment spans residues 378 to 398 (IVSVGWLVLSYALQSVGELMI). At 399–413 (SGLGLAMVAQLVPQR) the chain is on the cytoplasmic side. Residues 414–434 (LMGFIMGSWFLTTAGAAMVAG) form a helical membrane-spanning segment. Residues 435–458 (KVANLMAVPENITNPLLSLHVYGD) lie on the Periplasmic side of the membrane. The chain crosses the membrane as a helical span at residues 459–479 (IFFKIGITTGVIAVLMILAAP). At 480 to 492 (LLNRMTQDEQPGV) the chain is on the cytoplasmic side.

Belongs to the major facilitator superfamily. Proton-dependent oligopeptide transporter (POT/PTR) (TC 2.A.17) family. DtpA subfamily.

Its subcellular location is the cell inner membrane. Proton-dependent permease that transports di- and tripeptides. This chain is Dipeptide and tripeptide permease A, found in Erwinia pyrifoliae (strain DSM 12163 / CIP 106111 / Ep16/96).